Consider the following 190-residue polypeptide: Shikimate kinase (190 aa).

22–27 (GSGKST) contacts ATP. Ser26 is a Mg(2+) binding site. The substrate site is built by Asp44, Arg68, and Gly90. Arg127 is a binding site for ATP. A substrate-binding site is contributed by Arg146.

The protein belongs to the shikimate kinase family. As to quaternary structure, monomer. Requires Mg(2+) as cofactor.

It localises to the cytoplasm. The catalysed reaction is shikimate + ATP = 3-phosphoshikimate + ADP + H(+). It participates in metabolic intermediate biosynthesis; chorismate biosynthesis; chorismate from D-erythrose 4-phosphate and phosphoenolpyruvate: step 5/7. Its function is as follows. Catalyzes the specific phosphorylation of the 3-hydroxyl group of shikimic acid using ATP as a cosubstrate. The polypeptide is Shikimate kinase (Microcystis aeruginosa (strain NIES-843 / IAM M-2473)).